The sequence spans 75 residues: Small ribosomal subunit protein bS16 (75 aa).

The protein belongs to the bacterial ribosomal protein bS16 family.

The polypeptide is Small ribosomal subunit protein bS16 (Aliarcobacter butzleri (strain RM4018) (Arcobacter butzleri)).